Consider the following 388-residue polypeptide: Processive diacylglycerol beta-glucosyltransferase (388 aa).

Belongs to the glycosyltransferase 28 family. UgtP subfamily.

It is found in the cell membrane. It catalyses the reaction a 1,2-diacyl-3-O-(beta-D-glucopyranosyl)-sn-glycerol + UDP-alpha-D-glucose = a 1,2-diacyl-3-O-(beta-D-Glc-(1-&gt;6)-beta-D-Glc)-sn-glycerol + UDP + H(+). The catalysed reaction is a 1,2-diacyl-3-O-(beta-D-Glc-(1-&gt;6)-beta-D-Glc)-sn-glycerol + UDP-alpha-D-glucose = a 1,2-diacyl-3-O-(beta-D-Glc-(1-&gt;6)-beta-D-Glc-(1-&gt;6)-beta-D-Glc)-sn-glycerol + UDP + H(+). The enzyme catalyses a 1,2-diacyl-sn-glycerol + UDP-alpha-D-glucose = a 1,2-diacyl-3-O-(beta-D-glucopyranosyl)-sn-glycerol + UDP + H(+). Its pathway is glycolipid metabolism; diglucosyl-diacylglycerol biosynthesis. Its function is as follows. Processive glucosyltransferase involved in the biosynthesis of both the bilayer- and non-bilayer-forming membrane glucolipids. Is able to successively transfer up to three glucosyl residues to diacylglycerol (DAG), thereby catalyzing the formation of beta-monoglucosyl-DAG (3-O-(beta-D-glucopyranosyl)-1,2-diacyl-sn-glycerol), beta-diglucosyl-DAG (3-O-(beta-D-glucopyranosyl-beta-(1-&gt;6)-D-glucopyranosyl)-1,2-diacyl-sn-glycerol) and beta-triglucosyl-DAG (3-O-(beta-D-glucopyranosyl-beta-(1-&gt;6)-D-glucopyranosyl-beta-(1-&gt;6)-D-glucopyranosyl)-1,2-diacyl-sn-glycerol). Beta-diglucosyl-DAG is the predominant glycolipid found in Bacillales and is also used as a membrane anchor for lipoteichoic acid (LTA). This is Processive diacylglycerol beta-glucosyltransferase from Bacillus cereus (strain ATCC 14579 / DSM 31 / CCUG 7414 / JCM 2152 / NBRC 15305 / NCIMB 9373 / NCTC 2599 / NRRL B-3711).